The primary structure comprises 359 residues: Protein mab-21-like 2-B (359 aa).

Belongs to the mab-21 family.

The protein localises to the nucleus. Its subcellular location is the cytoplasm. Its function is as follows. Required for several aspects of embryonic development including normal development of the eye. In Xenopus laevis (African clawed frog), this protein is Protein mab-21-like 2-B (mab21l2-b).